The chain runs to 744 residues: Prestin (744 aa).

Topologically, residues 1 to 79 (MDHAEENEIP…WLPAYKFKEY (79 aa)) are cytoplasmic. The helical transmembrane segment at 80 to 105 (VLGDLVSGISTGVLQLPQGLAFAMLA) threads the bilayer. Residues 106–109 (AVPP) are Extracellular-facing. A helical membrane pass occupies residues 110-125 (VFGLYSSFYPVIMYCF). The Cytoplasmic segment spans residues 126-137 (FGTSRHISIGPF). Residues 138–147 (AVISLMIGGV) form a helical membrane-spanning segment. Topologically, residues 148–178 (AVRLVPDDIVIPGGVNATNGTEARDALRVKV) are extracellular. Positions 158–168 (IPGGVNATNGT) match the Involved in motor function motif. Asparagine 163 and asparagine 166 each carry an N-linked (GlcNAc...) asparagine glycan. Residues 179–196 (AMSVTLLSGIIQFCLGVC) form a helical membrane-spanning segment. Residues 197-208 (RFGFVAIYLTEP) are Cytoplasmic-facing. Residues 209–230 (LVRGFTTAAAVHVFTSMLKYLF) traverse the membrane as a helical segment. The Extracellular portion of the chain corresponds to 231 to 243 (GVKTKRYSGIFSV). The helical intramembrane region spans 244–252 (VYSTVAVLQ). At 253–258 (NVKNLN) the chain is on the extracellular side. The helical transmembrane segment at 259-282 (VCSLGVGLMVFGLLLGGKEFNERF) threads the bilayer. The Cytoplasmic segment spans residues 283–291 (KEKLPAPIP). The chain crosses the membrane as a helical span at residues 292 to 304 (LEFFAVVMGTGIS). Over 305–337 (AGFNLHESYSVDVVGTLPLGLLPPANPDTSLFH) the chain is Extracellular. Residues 338-361 (LVYVDAIAIAIVGFSVTISMAKTL) traverse the membrane as a helical segment. Residues 362–370 (ANKHGYQVD) are Cytoplasmic-facing. Residues 371 to 388 (GNQELIALGICNSIGSLF) form a helical membrane-spanning segment. The Extracellular portion of the chain corresponds to 389-396 (QTFSISCS). Residues 397 to 406 (LSRSLVQEGT) form a helical membrane-spanning segment. Residue serine 398 coordinates salicylate. At 407–410 (GGKT) the chain is on the cytoplasmic side. A helical membrane pass occupies residues 411 to 429 (QLAGCLASLMILLVILATG). Residues 430–436 (FLFESLP) lie on the Extracellular side of the membrane. A helical membrane pass occupies residues 437–455 (QAVLSAIVIVNLKGMFMQF). Over 456–469 (SDLPFFWRTSKIEL) the chain is Cytoplasmic. A helical transmembrane segment spans residues 470–484 (TIWLTTFVSSLFLGL). Position 485 (aspartate 485) is a topological domain, extracellular. The helical transmembrane segment at 486–497 (YGLITAVIIALL) threads the bilayer. The Cytoplasmic portion of the chain corresponds to 498 to 744 (TVIYRTQSPS…PNATPTTPEA (247 aa)). Residues 505–718 (SPSYKVLGQL…AVLGSHVREA (214 aa)) are extended region for STAS domain. The STAS domain occupies 525-713 (AYEEVKEIPG…HSIHDAVLGS (189 aa)). Residues 717-744 (EAMAEQEASAPPPQDDMEPNATPTTPEA) form a disordered region.

Belongs to the SLC26A/SulP transporter (TC 2.A.53) family. Homodimer. Interacts (via STAS domain) with CALM; this interaction is calcium-dependent and the STAS domain interacts with only one lobe of CALM which is an elongated conformation. Interacts with MYH1. Highly expressed in mature outer hair cells, but not in inner hair cells or other cells of the basilar membrane and the organ of Corti.

The protein localises to the lateral cell membrane. It carries out the reaction 2 hydrogencarbonate(in) + chloride(out) = 2 hydrogencarbonate(out) + chloride(in). Its function is as follows. Voltage-sensitive motor protein that drives outer hair cell (OHC) electromotility (eM) and participates in sound amplification in the hearing organ. Converts changes in the transmembrane electric potential into mechanical displacements resulting in the coupling of its expansion to movement of a charged voltage sensor across the lipid membrane. The nature of the voltage sensor is not completely clear, and two models compete. In the first model, acts as an incomplete transporter where intracellular chloride anion acts as extrinsic voltage sensor that drives conformational change in the protein which is sufficient to produce a length change in the plane of the membrane and hence in the length of the OHC. The second model in which multiple charged amino acid residues are distributed at the intracellular and extracellular membrane interfaces that form an intrinsic voltage sensor, whose movement produces the non-linear capacitance (NLC). However, the effective voltage sensor may be the result of a hybrid voltage sensor assembled from intrinsic charge (charged residues) and extrinsic charge (bound anion). Notably, binding of anions to the anion-binding pocket partially neutralizes the intrinsic positive charge rather than to form an electrically negative sensor, therefore remaining charge may serve as voltage sensor that, after depolarization, moves from down (expanded state) to up (contracted) conformation, which is accompanied by an eccentric contraction of the intermembrane cross-sectional area of the protein as well as a major increase in the hydrophobic thickness of the protein having as consequences the plasma membrane thickening and the cell contraction after membrane depolarization. The anion-binding pocket transits from the inward-open (Down) state, where it is exposed toward the intracellular solvent in the absence of anion, to the occluded (Up) state upon anion binding. Salicylate competes for the anion-binding site and inhibits the voltage-sensor movement, and therefore inhibits the charge transfer and electromotility by displacing Cl(-) from the anion-binding site and by preventing the structural transitions to the contracted state. In addition, can act as a weak Cl(-)/HCO3 (-) antiporter across the cell membrane and so regulate the intracellular pH of the outer hair cells (OHCs), while firstly found as being unable to mediate electrogenic anion transport. Moreover, supports a role in cardiac mechanical amplification serving as an elastic element to enhance the actomyosin- based sarcomere contraction system. In Meriones unguiculatus (Mongolian jird), this protein is Prestin.